A 395-amino-acid chain; its full sequence is Putative nickel insertion protein (395 aa).

The protein belongs to the LarC family.

This chain is Putative nickel insertion protein, found in Methanopyrus kandleri (strain AV19 / DSM 6324 / JCM 9639 / NBRC 100938).